The primary structure comprises 141 residues: Lutropin subunit beta (141 aa).

An N-terminal signal peptide occupies residues 1 to 20 (MEMLQGLLLLLLLSMGGAWA). 6 disulfides stabilise this stretch: Cys29-Cys77, Cys43-Cys92, Cys46-Cys130, Cys54-Cys108, Cys58-Cys110, and Cys113-Cys120. 2 N-linked (GlcNAc...) asparagine glycosylation sites follow: Asn33 and Asn50.

The protein belongs to the glycoprotein hormones subunit beta family. As to quaternary structure, heterodimer of a common alpha chain and a unique beta chain which confers biological specificity to thyrotropin, lutropin, follitropin and gonadotropin.

The protein localises to the secreted. Its function is as follows. Promotes spermatogenesis and ovulation by stimulating the testes and ovaries to synthesize steroids. The polypeptide is Lutropin subunit beta (LHB) (Gorilla gorilla gorilla (Western lowland gorilla)).